Consider the following 279-residue polypeptide: Thymidylate synthase 1 (279 aa).

R141 to R142 provides a ligand contact to dUMP. The active-site Nucleophile is the C161. DUMP contacts are provided by residues R181–D184, N192, and H222–Y224. D184 lines the (6R)-5,10-methylene-5,6,7,8-tetrahydrofolate pocket. Position 278 (A278) interacts with (6R)-5,10-methylene-5,6,7,8-tetrahydrofolate.

This sequence belongs to the thymidylate synthase family. Bacterial-type ThyA subfamily. In terms of assembly, homodimer.

Its subcellular location is the cytoplasm. The enzyme catalyses dUMP + (6R)-5,10-methylene-5,6,7,8-tetrahydrofolate = 7,8-dihydrofolate + dTMP. The protein operates within pyrimidine metabolism; dTTP biosynthesis. Functionally, catalyzes the reductive methylation of 2'-deoxyuridine-5'-monophosphate (dUMP) to 2'-deoxythymidine-5'-monophosphate (dTMP) while utilizing 5,10-methylenetetrahydrofolate (mTHF) as the methyl donor and reductant in the reaction, yielding dihydrofolate (DHF) as a by-product. This enzymatic reaction provides an intracellular de novo source of dTMP, an essential precursor for DNA biosynthesis. The chain is Thymidylate synthase 1 from Bacillus subtilis (strain 168).